The chain runs to 297 residues: Putative lipid kinase MamU (297 aa).

A DAGKc domain is found at 43–131 (EGKDMGRMVR…MDVGRVNDRY (89 aa)). 68–74 (GDGSLSR) is an ATP binding site. Residue glutamate 274 is the Proton acceptor of the active site.

This sequence belongs to the diacylglycerol/lipid kinase family.

It localises to the cytoplasm. In terms of biological role, might phosphorylate lipids. This chain is Putative lipid kinase MamU, found in Magnetospirillum gryphiswaldense (strain DSM 6361 / JCM 21280 / NBRC 15271 / MSR-1).